Reading from the N-terminus, the 366-residue chain is MTPEHLPTEQYEAQLAEKVVRLQSMMAPFSDLVPEVFRSPVSHYRMRAEFRIWHDGDDLYHIIFDQQTKSRIRVDSFPAASELINQLMTAMIAGVRNNPVLRHKLFQIDYLTTLSNQAVVSLLYHKKLDDEWRQEAEALRDALRAQNLNVHLIGRATKTKIALDQDYIDERLPVAGKEMIYRQVENSFTQPNAAMNIQMLEWALDVTKGSKGDLLELYCGNGNFSLALARNFDRVLATEIAKPSVAAAQYNIAANHIDNVQIIRMAAEEFTQAMNGVREFNRLQGIDLKSYQCETIFVDPPRSGLDSETEKMVQAYPRILYISCNPETLCKNLETLSQTHKVERLALFDQFPYTHHMECSVLLTAK.

Glutamine 190, tyrosine 218, asparagine 223, glutamate 239, and aspartate 299 together coordinate S-adenosyl-L-methionine. The active-site Nucleophile is cysteine 324. Glutamate 358 serves as the catalytic Proton acceptor.

It belongs to the class I-like SAM-binding methyltransferase superfamily. RNA M5U methyltransferase family. TrmA subfamily.

It carries out the reaction uridine(54) in tRNA + S-adenosyl-L-methionine = 5-methyluridine(54) in tRNA + S-adenosyl-L-homocysteine + H(+). The catalysed reaction is uridine(341) in tmRNA + S-adenosyl-L-methionine = 5-methyluridine(341) in tmRNA + S-adenosyl-L-homocysteine + H(+). Its function is as follows. Dual-specificity methyltransferase that catalyzes the formation of 5-methyluridine at position 54 (m5U54) in all tRNAs, and that of position 341 (m5U341) in tmRNA (transfer-mRNA). The sequence is that of tRNA/tmRNA (uracil-C(5))-methyltransferase from Escherichia coli O157:H7 (strain EC4115 / EHEC).